The following is a 331-amino-acid chain: MAQASPPRPERVLGASSPEARPAQEALLLPTGVFQVAEKMEKRTCALCPKDVEYNVLYFAQSENIAAHENCLLYSSGLVECEDQDPLNPDRSFDVESVKKEIQRGRKLKCKFCHKRGATVGCDLKNCNKNYHFFCAKKDDAVPQSDGVRGIYKLLCQQHAQFPIIAQSAKFSGVKRKRGRKKPLSGNHVQPPETMKCNTFIRQVKEEHGRHTDATVKVPFLKKCKEAGLLNYLLEEILDKVHSIPEKLMDETTSESDYEEIGSALFDCRLFEDTFVNFQAAIEKKIHASQQRWQQLKEEIELLQDLKQTLCSFQENRDLMSSSTSISSLSY.

The segment at 42–78 (KRTCALCPKDVEYNVLYFAQSENIAAHENCLLYSSGL) adopts a C2HC pre-PHD-type zinc-finger fold. The PHD-type zinc finger occupies 108–160 (LKCKFCHKRGATVGCDLKNCNKNYHFFCAKKDDAVPQSDGVRGIYKLLCQQHA).

As to quaternary structure, interacts with BRCA1 and RELA. Highly expressed in T and B-cells, as well as natural killer and mature dendritic cells. Expressed at higher levels in Th1 as compared to Th2 cells. Expressed at low levels in all normal tissues tested, including lung, testis, small intestine, breast, liver and placenta.

It is found in the nucleus. Functionally, positive regulator of Th1-type cytokine gene expression. This is PHD finger protein 11 (PHF11) from Homo sapiens (Human).